Reading from the N-terminus, the 23-residue chain is Magainin-B2 (23 aa).

In terms of tissue distribution, expressed by the skin glands.

The protein localises to the secreted. Its function is as follows. Has antimicrobial activity against Gram-negative bacterium E.coli ATCC 25922 (MIC=50 uM) and against fungus C.albicans ATCC 90028 (MIC=100 uM). Has no hemolytic activity against human erythrocytes even at high concentrations. This chain is Magainin-B2, found in Xenopus borealis (Kenyan clawed frog).